A 259-amino-acid polypeptide reads, in one-letter code: Phosphatidylglycerol--prolipoprotein diacylglyceryl transferase (259 aa).

The next 4 membrane-spanning stretches (helical) occupy residues 10 to 30, 50 to 70, 86 to 106, and 112 to 132; these read IGLL…LFAY, IISW…ILFY, WKGG…MYIF, and IKFL…IFLG. Arg133 serves as a coordination point for a 1,2-diacyl-sn-glycero-3-phospho-(1'-sn-glycerol). 3 helical membrane-spanning segments follow: residues 169-189, 197-217, and 227-247; these read LYEA…LFFF, GMLF…IEFV, and ILFN…ILGI.

This sequence belongs to the Lgt family.

The protein localises to the cell inner membrane. It carries out the reaction L-cysteinyl-[prolipoprotein] + a 1,2-diacyl-sn-glycero-3-phospho-(1'-sn-glycerol) = an S-1,2-diacyl-sn-glyceryl-L-cysteinyl-[prolipoprotein] + sn-glycerol 1-phosphate + H(+). It functions in the pathway protein modification; lipoprotein biosynthesis (diacylglyceryl transfer). In terms of biological role, catalyzes the transfer of the diacylglyceryl group from phosphatidylglycerol to the sulfhydryl group of the N-terminal cysteine of a prolipoprotein, the first step in the formation of mature lipoproteins. This Ehrlichia ruminantium (strain Gardel) protein is Phosphatidylglycerol--prolipoprotein diacylglyceryl transferase.